A 155-amino-acid chain; its full sequence is Ribosomal RNA large subunit methyltransferase H (155 aa).

S-adenosyl-L-methionine contacts are provided by residues Leu-72, Gly-103, and 122 to 127; that span reads FGRMVW.

This sequence belongs to the RNA methyltransferase RlmH family. Homodimer.

It localises to the cytoplasm. It carries out the reaction pseudouridine(1915) in 23S rRNA + S-adenosyl-L-methionine = N(3)-methylpseudouridine(1915) in 23S rRNA + S-adenosyl-L-homocysteine + H(+). Its function is as follows. Specifically methylates the pseudouridine at position 1915 (m3Psi1915) in 23S rRNA. This chain is Ribosomal RNA large subunit methyltransferase H, found in Cereibacter sphaeroides (strain ATCC 17023 / DSM 158 / JCM 6121 / CCUG 31486 / LMG 2827 / NBRC 12203 / NCIMB 8253 / ATH 2.4.1.) (Rhodobacter sphaeroides).